Here is a 166-residue protein sequence, read N- to C-terminus: Transcription elongation factor GreA (166 aa).

The protein belongs to the GreA/GreB family.

Necessary for efficient RNA polymerase transcription elongation past template-encoded arresting sites. The arresting sites in DNA have the property of trapping a certain fraction of elongating RNA polymerases that pass through, resulting in locked ternary complexes. Cleavage of the nascent transcript by cleavage factors such as GreA or GreB allows the resumption of elongation from the new 3'terminus. GreA releases sequences of 2 to 3 nucleotides. In Anaeromyxobacter sp. (strain K), this protein is Transcription elongation factor GreA.